The primary structure comprises 123 residues: Ribosome-binding factor A (123 aa).

It belongs to the RbfA family. As to quaternary structure, monomer. Binds 30S ribosomal subunits, but not 50S ribosomal subunits or 70S ribosomes.

The protein localises to the cytoplasm. Functionally, one of several proteins that assist in the late maturation steps of the functional core of the 30S ribosomal subunit. Associates with free 30S ribosomal subunits (but not with 30S subunits that are part of 70S ribosomes or polysomes). Required for efficient processing of 16S rRNA. May interact with the 5'-terminal helix region of 16S rRNA. In Rickettsia bellii (strain OSU 85-389), this protein is Ribosome-binding factor A.